We begin with the raw amino-acid sequence, 99 residues long: NADH-quinone oxidoreductase subunit K (99 aa).

Transmembrane regions (helical) follow at residues proline 3–leucine 23, isoleucine 28–phenylalanine 48, and methionine 59–isoleucine 79.

Belongs to the complex I subunit 4L family. In terms of assembly, NDH-1 is composed of 14 different subunits. Subunits NuoA, H, J, K, L, M, N constitute the membrane sector of the complex.

Its subcellular location is the cell membrane. The enzyme catalyses a quinone + NADH + 5 H(+)(in) = a quinol + NAD(+) + 4 H(+)(out). NDH-1 shuttles electrons from NADH, via FMN and iron-sulfur (Fe-S) centers, to quinones in the respiratory chain. The immediate electron acceptor for the enzyme in this species is believed to be a menaquinone. Couples the redox reaction to proton translocation (for every two electrons transferred, four hydrogen ions are translocated across the cytoplasmic membrane), and thus conserves the redox energy in a proton gradient. The sequence is that of NADH-quinone oxidoreductase subunit K from Mycobacterium bovis (strain ATCC BAA-935 / AF2122/97).